The chain runs to 510 residues: MIWHVQNENLILDSTIIFMKAFHLPLFDGSFIFPEGILIFGLILLLMIDSTSDQTDIPWFYFISSISLVMSITALLFRWREEPRILFSGNFQTNNFNEIFQFLILLCSTLCIPLSVEYIECTEMAITEFLLFVLTATLGGMFLCGANDLITIFVAPECFSLCSYLLSGYTKKDVRSNEATMKYLLMGGASSSILVHGFSWLYGSSGGEIELQEIVNGLINTQMYNSPGISIALIFITVGIGFKLSPAPSHQWTPDVYEGSPTPVVAFLSVTSKVAASASATRIFDIPFYFSSNEWHPLLEILAILSMILGNLIAITQTSMKRMLAYSSIGQIGYVIIGIIVGDANGGYASMITYMLFYISMNLGTFACIVLFGLRTGTDNIRDYAGLYTKDPFLALSLALCLLSLGGLPPLAGFFGKLHLFWCGWQAGLYFLVSIGLFTSVVSIYYYLKIIKLLMTGRKQEITPHVRNYRRSPLRSNNSIELSMIVCVIASTIPGISMNPIIAIAQDTLF.

Transmembrane regions (helical) follow at residues 26–46 (LFDGSFIFPEGILIFGLILLL), 57–77 (IPWFYFISSISLVMSITALLF), 99–119 (IFQFLILLCSTLCIPLSVEYI), 124–144 (MAITEFLLFVLTATLGGMFLC), 149–169 (LITIFVAPECFSLCSYLLSGY), 183–203 (YLLMGGASSSILVHGFSWLYG), 227–247 (PGISIALIFITVGIGFKLSPA), 295–315 (WHPLLEILAILSMILGNLIAI), 323–342 (MLAYSSIGQIGYVIIGIIVG), 354–374 (YMLFYISMNLGTFACIVLFGL), 395–415 (ALSLALCLLSLGGLPPLAGFF), 418–438 (LHLFWCGWQAGLYFLVSIGLF), and 484–504 (MIVCVIASTIPGISMNPIIAI).

The protein belongs to the complex I subunit 2 family. In terms of assembly, NDH is composed of at least 16 different subunits, 5 of which are encoded in the nucleus.

Its subcellular location is the plastid. It localises to the chloroplast thylakoid membrane. It catalyses the reaction a plastoquinone + NADH + (n+1) H(+)(in) = a plastoquinol + NAD(+) + n H(+)(out). The catalysed reaction is a plastoquinone + NADPH + (n+1) H(+)(in) = a plastoquinol + NADP(+) + n H(+)(out). Functionally, NDH shuttles electrons from NAD(P)H:plastoquinone, via FMN and iron-sulfur (Fe-S) centers, to quinones in the photosynthetic chain and possibly in a chloroplast respiratory chain. The immediate electron acceptor for the enzyme in this species is believed to be plastoquinone. Couples the redox reaction to proton translocation, and thus conserves the redox energy in a proton gradient. This Oenothera argillicola (Appalachian evening primrose) protein is NAD(P)H-quinone oxidoreductase subunit 2 B, chloroplastic.